The chain runs to 416 residues: Nuclear hormone receptor family member nhr-59 (416 aa).

A DNA-binding region (nuclear receptor) is located at residues 17 to 94 (QTFCQVCGQE…IGMDIQNFQF (78 aa)). 2 NR C4-type zinc fingers span residues 20 to 40 (CQVC…CRAC) and 57 to 82 (CKDG…LKKC). The 254-residue stretch at 162-415 (TRLQKLSSSL…FSHPELVKDV (254 aa)) folds into the NR LBD domain.

It belongs to the nuclear hormone receptor family.

The protein localises to the nucleus. Its function is as follows. Orphan nuclear receptor. The chain is Nuclear hormone receptor family member nhr-59 from Caenorhabditis elegans.